A 131-amino-acid polypeptide reads, in one-letter code: Heterochromatin silencing protein rss1 (131 aa).

In terms of assembly, monomer.

Its subcellular location is the cytoplasm. It is found in the nucleus. Required for heterochromatin silencing within pericentromeric repeats and at telomers. Facilitates the recruitment of Clr6 histone deacetylase (HDAC) by interacting with histones. Also interacts with Rad25, which mediates heterochromatin silencing in DNA repeats by recruiting the RITS complex. Together with Rad25, forms a regulatory hub that defines heterochromatin silencing within tandem repeats via linking RNAi and HDAC. In Schizosaccharomyces pombe (strain 972 / ATCC 24843) (Fission yeast), this protein is Heterochromatin silencing protein rss1 (rss1).